The following is a 274-amino-acid chain: Malonyl-[acyl-carrier protein] O-methyltransferase (274 aa).

Belongs to the methyltransferase superfamily.

The catalysed reaction is malonyl-[ACP] + S-adenosyl-L-methionine = malonyl-[ACP] methyl ester + S-adenosyl-L-homocysteine. The protein operates within cofactor biosynthesis; biotin biosynthesis. Functionally, converts the free carboxyl group of a malonyl-thioester to its methyl ester by transfer of a methyl group from S-adenosyl-L-methionine (SAM). It allows to synthesize pimeloyl-ACP via the fatty acid synthetic pathway. The chain is Malonyl-[acyl-carrier protein] O-methyltransferase from Bacteroides helcogenes (strain ATCC 35417 / DSM 20613 / JCM 6297 / CCUG 15421 / P 36-108).